The following is a 589-amino-acid chain: MGAARIAPGLALLLCCPVLSSAYALVDADDVMTKEEQIFLLHRAQAQCEKRLKEVLQRPADIMESDKGWASASTSGKPKKEKPSGKLHPESEEDKEVPTGSRPRGRPCLPEWDHILCWPLGAPGEVVAMPCPDYIYDFNHKGHAYRRCDRNGSWELVPGHNRTWANYSECVKFLTNETREREVFDRLGMIYTVGYSVSLASLTVAVLILAYFRRLHCTRNYIHMHLFLSFMLRAVSIFVKDAVLYSGTALDEAERLTEEELRAIAQAPPPPAAAAGYVGCRVAVTFFLYFLATNYYWILVEGLYLHSLIFMAFFSEKKYLWGFTVFGWGLPAIFVAVWVSVRATLANTGCWDLSSGNKKWIIQVPILASIVLNFILFINIVRVLATKLRETNAGRCDTRQQYRKLLKSTLVLMPLFGVHYIVFMATPYTEVSGTLWQVQMHYEMLFNSFQGFFVAIIYCFCNGEVQAEIKKSWSRWTLALDFKRKARSGSSSYSYGPMVSHTSVTNVGPRTGLGLPLSPRLLPAATTNGHPPLPGHTKSGSPALQATPPAVAAPKEDGFLNGSCSGLDEEACAPERPPVLLQEEWETVM.

The N-terminal stretch at M1 to A28 is a signal peptide. Over D29 to G188 the chain is Extracellular. 3 disulfide bridges follow: C48–C117, C108–C148, and C131–C170. Positions E64–G105 are disordered. Basic and acidic residues predominate over residues E81–E90. 4 N-linked (GlcNAc...) asparagine glycosylation sites follow: N151, N161, N166, and N176. Residues M189–L209 traverse the membrane as a helical segment. The Cytoplasmic segment spans residues A210–H223. Residues M224–L244 traverse the membrane as a helical segment. Over Y245–N294 the chain is Extracellular. Residues Y295–S315 form a helical membrane-spanning segment. The Cytoplasmic portion of the chain corresponds to E316–K318. A helical membrane pass occupies residues Y319–V339. Residues S340 to W360 lie on the Extracellular side of the membrane. Residues I361 to V381 form a helical membrane-spanning segment. Topologically, residues R382–K404 are cytoplasmic. Residues L405 to A425 form a helical membrane-spanning segment. Over T426–Q439 the chain is Extracellular. The helical transmembrane segment at M440–F460 threads the bilayer. Over C461 to M589 the chain is Cytoplasmic. The Important for interaction with G proteins motif lies at W473–W476. A disordered region spans residues A524–P549. T547 carries the post-translational modification Phosphothreonine.

This sequence belongs to the G-protein coupled receptor 2 family. As to quaternary structure, homodimer in the absence of bound ligand. Peptide hormone binding leads to dissociation of the homodimer. Post-translationally, N-glycosylated.

It localises to the cell membrane. Its function is as follows. G-protein-coupled receptor for parathyroid hormone (PTH) and for parathyroid hormone-related peptide (PTHLH). Ligand binding causes a conformation change that triggers signaling via guanine nucleotide-binding proteins (G proteins) and modulates the activity of downstream effectors, such as adenylate cyclase (cAMP). PTH1R is coupled to G(s) G alpha proteins and mediates activation of adenylate cyclase activity. PTHLH dissociates from PTH1R more rapidly than PTH; as consequence, the cAMP response induced by PTHLH decays faster than the response induced by PTH. The sequence is that of Parathyroid hormone/parathyroid hormone-related peptide receptor (PTH1R) from Bos taurus (Bovine).